Consider the following 371-residue polypeptide: Probable diguanylate cyclase DgcC (371 aa).

Transmembrane regions (helical) follow at residues 46-66 (AVGLAGMFLPIASTLVSHPPP), 68-88 (WWWLVLVGWAFVWPHLAWQIA), 112-132 (WVGVMGVNVLPSTAMLMIMCL), 143-163 (FVAGLVLMVVSCLVTLELTGI), and 171-191 (PLEWWLSLPIIVIYPLLFGWV). Residues 240–371 (RDATLLIIDI…AGRNRTEVAA (132 aa)) form the GGDEF domain. Mg(2+)-binding residues include Asp248 and Ile249. Substrate-binding residues include Asn256 and Asp265. Asp291 serves as a coordination point for Mg(2+).

Requires Mg(2+) as cofactor.

The protein localises to the cell inner membrane. It carries out the reaction 2 GTP = 3',3'-c-di-GMP + 2 diphosphate. It functions in the pathway purine metabolism; 3',5'-cyclic di-GMP biosynthesis. In terms of biological role, a probable diguanylate cyclase. The last member of a cascade of expressed proteins, its expression requires DgcM. DgcC production induces biosynthesis of cellulose in some E.coli isolates, but not in K12 strains. Cyclic-di-GMP is a second messenger which controls cell surface-associated traits in bacteria. This chain is Probable diguanylate cyclase DgcC, found in Escherichia coli (strain K12).